Here is a 451-residue protein sequence, read N- to C-terminus: 2-succinylbenzoate--CoA ligase (451 aa).

The protein belongs to the ATP-dependent AMP-binding enzyme family. MenE subfamily.

The enzyme catalyses 2-succinylbenzoate + ATP + CoA = 2-succinylbenzoyl-CoA + AMP + diphosphate. It functions in the pathway quinol/quinone metabolism; 1,4-dihydroxy-2-naphthoate biosynthesis; 1,4-dihydroxy-2-naphthoate from chorismate: step 5/7. The protein operates within quinol/quinone metabolism; menaquinone biosynthesis. Converts 2-succinylbenzoate (OSB) to 2-succinylbenzoyl-CoA (OSB-CoA). The protein is 2-succinylbenzoate--CoA ligase of Lactococcus lactis subsp. lactis (strain IL1403) (Streptococcus lactis).